The following is a 288-amino-acid chain: Bifunctional protein FolD (288 aa).

Residues 166–168 (GAS) and I232 contribute to the NADP(+) site.

The protein belongs to the tetrahydrofolate dehydrogenase/cyclohydrolase family. In terms of assembly, homodimer.

It catalyses the reaction (6R)-5,10-methylene-5,6,7,8-tetrahydrofolate + NADP(+) = (6R)-5,10-methenyltetrahydrofolate + NADPH. The enzyme catalyses (6R)-5,10-methenyltetrahydrofolate + H2O = (6R)-10-formyltetrahydrofolate + H(+). It participates in one-carbon metabolism; tetrahydrofolate interconversion. Catalyzes the oxidation of 5,10-methylenetetrahydrofolate to 5,10-methenyltetrahydrofolate and then the hydrolysis of 5,10-methenyltetrahydrofolate to 10-formyltetrahydrofolate. The polypeptide is Bifunctional protein FolD (Acidithiobacillus ferrooxidans (strain ATCC 23270 / DSM 14882 / CIP 104768 / NCIMB 8455) (Ferrobacillus ferrooxidans (strain ATCC 23270))).